The primary structure comprises 324 residues: Arginase (324 aa).

4 residues coordinate Mn(2+): His-115, Asp-142, His-144, and Asp-146. Substrate is bound by residues His-144–His-148, Ser-155–Asn-157, and Asp-196. 2 residues coordinate Mn(2+): Asp-244 and Asp-246. Residues Thr-258 and Glu-289 each contribute to the substrate site.

Belongs to the arginase family. As to quaternary structure, homohexamer. The cofactor is Mn(2+).

It carries out the reaction L-arginine + H2O = urea + L-ornithine. The protein operates within nitrogen metabolism; urea cycle; L-ornithine and urea from L-arginine: step 1/1. The chain is Arginase (arcA) from Agrobacterium fabrum (strain C58 / ATCC 33970) (Agrobacterium tumefaciens (strain C58)).